A 163-amino-acid polypeptide reads, in one-letter code: Beta-lactoglobulin-2 (163 aa).

2 disulfide bridges follow: Cys66/Cys161 and Cys106/Cys120.

This sequence belongs to the calycin superfamily. Lipocalin family. As to quaternary structure, monomer.

The protein localises to the secreted. In terms of biological role, lactoglobulin is the primary component of whey, it binds retinol and is probably involved in the transport of that molecule. This is Beta-lactoglobulin-2 (LGB2) from Felis catus (Cat).